The sequence spans 237 residues: Ribose-5-phosphate isomerase A (237 aa).

Substrate-binding positions include 28-31, 83-86, and 97-100; these read SGST, DGAD, and KGRG. The active-site Proton acceptor is Glu106. Lys124 lines the substrate pocket.

Belongs to the ribose 5-phosphate isomerase family. In terms of assembly, homodimer.

The catalysed reaction is aldehydo-D-ribose 5-phosphate = D-ribulose 5-phosphate. The protein operates within carbohydrate degradation; pentose phosphate pathway; D-ribose 5-phosphate from D-ribulose 5-phosphate (non-oxidative stage): step 1/1. Functionally, catalyzes the reversible conversion of ribose-5-phosphate to ribulose 5-phosphate. This chain is Ribose-5-phosphate isomerase A, found in Thermomicrobium roseum (strain ATCC 27502 / DSM 5159 / P-2).